The sequence spans 424 residues: Enolase (424 aa).

Q162 serves as a coordination point for (2R)-2-phosphoglycerate. The active-site Proton donor is E204. D241, E284, and D311 together coordinate Mg(2+). Positions 336, 365, 366, and 387 each coordinate (2R)-2-phosphoglycerate. The active-site Proton acceptor is the K336.

This sequence belongs to the enolase family. Mg(2+) is required as a cofactor.

The protein resides in the cytoplasm. Its subcellular location is the secreted. It is found in the cell surface. The catalysed reaction is (2R)-2-phosphoglycerate = phosphoenolpyruvate + H2O. Its pathway is carbohydrate degradation; glycolysis; pyruvate from D-glyceraldehyde 3-phosphate: step 4/5. Its function is as follows. Catalyzes the reversible conversion of 2-phosphoglycerate (2-PG) into phosphoenolpyruvate (PEP). It is essential for the degradation of carbohydrates via glycolysis. This Chelativorans sp. (strain BNC1) protein is Enolase.